Here is a 126-residue protein sequence, read N- to C-terminus: Glycine cleavage system H protein (126 aa).

Residues 23-104 form the Lipoyl-binding domain; sequence KVRVGITDFA…YDEGWMIEII (82 aa). At lysine 64 the chain carries N6-lipoyllysine.

This sequence belongs to the GcvH family. The glycine cleavage system is composed of four proteins: P, T, L and H. (R)-lipoate is required as a cofactor.

Its function is as follows. The glycine cleavage system catalyzes the degradation of glycine. The H protein shuttles the methylamine group of glycine from the P protein to the T protein. In Chlorobium phaeobacteroides (strain BS1), this protein is Glycine cleavage system H protein.